A 120-amino-acid polypeptide reads, in one-letter code: UPF0145 protein Bcenmc03_5217 (120 aa).

It belongs to the UPF0145 family.

The protein is UPF0145 protein Bcenmc03_5217 of Burkholderia orbicola (strain MC0-3).